The following is a 92-amino-acid chain: CRISPR-associated endoribonuclease Cas2 3 (92 aa).

Mg(2+) is bound at residue aspartate 9.

The protein belongs to the CRISPR-associated endoribonuclease Cas2 protein family. In terms of assembly, homodimer, forms a heterotetramer with a Cas1 homodimer. Mg(2+) is required as a cofactor.

Functionally, CRISPR (clustered regularly interspaced short palindromic repeat), is an adaptive immune system that provides protection against mobile genetic elements (viruses, transposable elements and conjugative plasmids). CRISPR clusters contain sequences complementary to antecedent mobile elements and target invading nucleic acids. CRISPR clusters are transcribed and processed into CRISPR RNA (crRNA). Functions as a ssRNA-specific endoribonuclease. Involved in the integration of spacer DNA into the CRISPR cassette. This Synechocystis sp. (strain ATCC 27184 / PCC 6803 / Kazusa) protein is CRISPR-associated endoribonuclease Cas2 3.